A 423-amino-acid chain; its full sequence is Pre-mRNA polyadenylation factor fip-1 (423 aa).

Positions 1 to 11 are enriched in acidic residues; the sequence is MDIDEDEDFYA. Disordered stretches follow at residues 1–178, 278–307, and 360–423; these read MDID…PVRT, GPGGPGVGPAGPGAMGPGGPAGAGGMGGPG, and PGGG…GRRW. Low complexity predominate over residues 19–61; sequence PPTTAATTTTPATTTTTAAPTTTTTTTSTTTASAPPTTTSSST. Residues 65-90 show a composition bias toward acidic residues; sequence DELEEGEEEDEGGGAMDEDDDSDIDI. Positions 135 to 146 are enriched in low complexity; the sequence is GTNSNSNSSSNK. Positions 360–415 are enriched in gly residues; that stretch reads PGGGPGGPGTGGMGPGGPGGQGGQGQQFGGGFGGNQGQGGYGGYDQMGGAGGGGRG.

It belongs to the FIP1 family.

It localises to the nucleus. Functionally, pre-mRNA polyadenylation factor that directly interacts with poly(A) polymerase. The sequence is that of Pre-mRNA polyadenylation factor fip-1 (fip-1) from Neurospora crassa (strain ATCC 24698 / 74-OR23-1A / CBS 708.71 / DSM 1257 / FGSC 987).